The chain runs to 373 residues: P2Y purinoceptor 1 (373 aa).

Residues 1–51 (MTEVLWPAVPNGTDAAFLAGPGSSWGNSTVASTAAVSSSFKCALTKTGFQF) lie on the Extracellular side of the membrane. N-linked (GlcNAc...) asparagine glycans are attached at residues Asn11 and Asn27. 2 cysteine pairs are disulfide-bonded: Cys42/Cys296 and Cys124/Cys202. Lys46 serves as a coordination point for ADP. The chain crosses the membrane as a helical span at residues 52–74 (YYLPAVYILVFIIGFLGNSVAIW). The Cytoplasmic segment spans residues 75–87 (MFVFHMKPWSGIS). The chain crosses the membrane as a helical span at residues 88-109 (VYMFNLALADFLYVLTLPALIF). Over 110 to 125 (YYFNKTDWIFGDAMCK) the chain is Extracellular. A glycan (N-linked (GlcNAc...) asparagine) is linked at Asn113. The helical transmembrane segment at 126–147 (LQRFIFHVNLYGSILFLTCISA) threads the bilayer. The Cytoplasmic portion of the chain corresponds to 148–166 (HRYSGVVYPLKSLGRLKKK). The helical transmembrane segment at 167–188 (NAICISVLVWLIVVVAISPILF) threads the bilayer. At 189-214 (YSGTGVRKNKTITCYDTTSDEYLRSY) the chain is on the extracellular side. Asn197 carries an N-linked (GlcNAc...) asparagine glycan. Residue 203–205 (YDT) participates in ADP binding. The chain crosses the membrane as a helical span at residues 215-237 (FIYSMCTTVAMFCVPLVLILGCY). Over 238 to 260 (GLIVRALIYKDLDNSPLRRKSIY) the chain is Cytoplasmic. Residues 261-284 (LVIIVLTVFAVSYIPFHVMKTMNL) traverse the membrane as a helical segment. Residues 283-287 (NLRAR), 303-306 (YATY), and Arg310 contribute to the ADP site. Over 285–303 (RARLDFQTPAMCAFNDRVY) the chain is Extracellular. Residues 304 to 325 (ATYQVTRGLASLNSCVDPILYF) traverse the membrane as a helical segment. Residues 326–373 (LAGDTFRRRLSRATRKASRRSEANLQSKSEDMTLNILPEFKQNGDTSL) lie on the Cytoplasmic side of the membrane.

It belongs to the G-protein coupled receptor 1 family.

Its subcellular location is the cell membrane. Its activity is regulated as follows. ATP functions as antagonist and inhibits ADP-induced mobilization of Ca(2+). The P2Y1 receptor-specific antagonists A3P5PS, A3P5P and A2P5P inhibit downstream signaling mediated by mobilization of Ca(2+) from intracellular stores, and platelet shape changes in response to extracellular ADP. In terms of biological role, receptor for extracellular adenine nucleotides such as ADP. In platelets, binding to ADP leads to mobilization of intracellular calcium ions via activation of phospholipase C, a change in platelet shape, and ultimately platelet aggregation. The chain is P2Y purinoceptor 1 (P2RY1) from Homo sapiens (Human).